The chain runs to 443 residues: ATP-dependent protease ATPase subunit HslU (443 aa).

Residues Ile-18, 60-65 (GVGKTE), Asp-256, Glu-321, and Arg-393 each bind ATP.

The protein belongs to the ClpX chaperone family. HslU subfamily. A double ring-shaped homohexamer of HslV is capped on each side by a ring-shaped HslU homohexamer. The assembly of the HslU/HslV complex is dependent on binding of ATP.

It localises to the cytoplasm. Its function is as follows. ATPase subunit of a proteasome-like degradation complex; this subunit has chaperone activity. The binding of ATP and its subsequent hydrolysis by HslU are essential for unfolding of protein substrates subsequently hydrolyzed by HslV. HslU recognizes the N-terminal part of its protein substrates and unfolds these before they are guided to HslV for hydrolysis. This chain is ATP-dependent protease ATPase subunit HslU, found in Salmonella arizonae (strain ATCC BAA-731 / CDC346-86 / RSK2980).